Consider the following 744-residue polypeptide: ATP-dependent zinc metalloprotease FtsH (744 aa).

Over 1-16 (MQDQNNSNTPKKKKLS) the chain is Cytoplasmic. Residues 17 to 37 (FWGIIGIVASILVLLVIAYII) traverse the membrane as a helical segment. Residues 38–177 (YYYVSQTTVL…ESIWSTVLRY (140 aa)) lie on the Extracellular side of the membrane. A helical membrane pass occupies residues 178-198 (GTNIIFLLLFAASFIFMFMSF). Residues 199–744 (RSQRGTGGLL…EEKSKDEKNN (546 aa)) lie on the Cytoplasmic side of the membrane. Residue 264-271 (GPPGTGKT) participates in ATP binding. His486 contributes to the Zn(2+) binding site. Glu487 is a catalytic residue. Zn(2+) contacts are provided by His490 and Asp564. Residues 722 to 744 (IEANKSSSKSTVNEEKSKDEKNN) are disordered. Positions 733–744 (VNEEKSKDEKNN) are enriched in basic and acidic residues.

It in the central section; belongs to the AAA ATPase family. The protein in the C-terminal section; belongs to the peptidase M41 family. Homohexamer. The cofactor is Zn(2+).

Its subcellular location is the cell membrane. Functionally, acts as a processive, ATP-dependent zinc metallopeptidase for both cytoplasmic and membrane proteins. Plays a role in the quality control of integral membrane proteins. This Metamycoplasma arthritidis (strain 158L3-1) (Mycoplasma arthritidis) protein is ATP-dependent zinc metalloprotease FtsH.